Reading from the N-terminus, the 139-residue chain is Thiosulfate:glutathione sulfurtransferase (139 aa).

A Phosphoserine modification is found at S26. The Rhodanese domain occupies 37 to 138 (HDPNVVLVDV…WVSHGGDKLD (102 aa)). C98 (cysteine persulfide intermediate) is an active-site residue.

It localises to the mitochondrion. It carries out the reaction thiosulfate + glutathione = S-sulfanylglutathione + sulfite + H(+). GSS(-) is a potent inhibitor of RDL1, since the presence of the sulfur dioxygenase strongly increases the RDL1 catalytic activity. Its function is as follows. Thiosulfate:glutathione sulfurtransferase (TST) required to produce S-sulfanylglutathione (GSS(-)), a central intermediate in hydrogen sulfide metabolism. Provides the link between the first step in H(2)S metabolism performed by the sulfide:quinone oxidoreductase (SQOR) which catalyzes the conversion of H(2)S to thiosulfate, and the sulfur dioxygenase (SDO) which uses GSS(-) as substrate. The thermodynamic coupling of the irreversible SDO and reversible TST reactions provides a model for the physiologically relevant reaction with thiosulfate as the sulfane donor. This Saccharomyces cerevisiae (strain ATCC 204508 / S288c) (Baker's yeast) protein is Thiosulfate:glutathione sulfurtransferase (RDL1).